The primary structure comprises 508 residues: Histidine ammonia-lyase (508 aa).

The segment at residues 145-147 is a cross-link (5-imidazolinone (Ala-Gly)); that stretch reads ASG. 2,3-didehydroalanine (Ser) is present on S146.

This sequence belongs to the PAL/histidase family. Contains an active site 4-methylidene-imidazol-5-one (MIO), which is formed autocatalytically by cyclization and dehydration of residues Ala-Ser-Gly.

The protein resides in the cytoplasm. The catalysed reaction is L-histidine = trans-urocanate + NH4(+). The protein operates within amino-acid degradation; L-histidine degradation into L-glutamate; N-formimidoyl-L-glutamate from L-histidine: step 1/3. This is Histidine ammonia-lyase from Myxococcus xanthus (strain DK1622).